The sequence spans 337 residues: Prenyltransferase terC (337 aa).

Mg(2+) contacts are provided by D111 and D115.

The protein belongs to the FPP/GGPP synthase family. It depends on Mg(2+) as a cofactor.

It participates in secondary metabolite biosynthesis. Its function is as follows. Prenyltransferase; part of the gene cluster that mediates the biosynthesis of terpendoles, indole-diterpene (IDT) mycotoxins including terpendole I, terpendole K, terpendole C, as well as the kinesin Eg5 inhibitor terpendole E. Terpendoles biosynthesis begins with the synthesis of geranylgeranyl diphosphate (GGPP) by a yet unidentified GGPP synthase. Condensation of indole-3-glycerol phosphate with GGPP by the prenyltransferase terC then forms 3-geranylgeranylindole (3-GGI), followed by epoxidation and cyclization of this intermediate (by the FAD-dependent monooxygeanse terM and the terpene cyclase terB) to form paspaline. The cytochrome monooxygenase terQ then hydroxylates paspalline at C-11 to yield terpendole E. The cytochrome monooxygenase terP converts terpendole E to 13-desoxyterpendole I, and terQ converts 13-desoxyterpendole I into terpendole I. TerF and terK are required for conversion of terpendole I to terpendole C which is further converted to terpendole K. The polypeptide is Prenyltransferase terC (Tolypocladium album (Soil fungus)).